We begin with the raw amino-acid sequence, 583 residues long: AP-1-like transcription factor YAP1 (583 aa).

Residues 1–86 (MSTSTAKRPF…KELEDKVSQL (86 aa)) are disordered. The span at 8–17 (RPFDNKRAGS) shows a compositional bias: basic and acidic residues. A compositionally biased stretch (low complexity) spans 24-36 (SDSGGNNSGSSPA). Basic residues predominate over residues 37-46 (SKRRERKPGR). The short motif at 41–48 (ERKPGRKP) is the Bipartite nuclear localization signal element. Basic and acidic residues-rich tracts occupy residues 47–58 (KPLETEAKDKRT) and 67–84 (AFRE…DKVS). The bZIP domain maps to 51–114 (TEAKDKRTAQ…TNLLSELKRY (64 aa)). Residues 54-77 (KDKRTAQNRAAQRAFRERRERKMK) are basic motif. Positions 79–86 (LEDKVSQL) are leucine-zipper. A Bipartite nuclear localization signal motif is present at residues 120–127 (KKRDSILL). Residues 177-195 (SKIPSPSSDSTSPSASTSI) show a composition bias toward low complexity. Residues 177–233 (SKIPSPSSDSTSPSASTSILDNANNKSVSSTNLNHSRSSISNSSSSPSNVNGLSSRK) are disordered. A compositionally biased stretch (polar residues) spans 196–207 (LDNANNKSVSST). Positions 208-230 (NLNHSRSSISNSSSSPSNVNGLS) are enriched in low complexity. Residues 265 to 272 (CSKLSMAC) form a n-CRD region. 2 cysteine pairs are disulfide-bonded: C265–C531 and C272–C562. 2 disordered regions span residues 275–329 (KSNP…SASA) and 350–373 (QYND…VSAW). Low complexity predominate over residues 297 to 312 (KSNSNVNITNHNNNKI). Over residues 316–329 (DLSSSAPLHDSASA) the composition is skewed to polar residues. The interval 531–562 (CSEVWDRITAHPRYSDLDIDGLCLELRTKAKC) is c-CRD. The short motif at 547-554 (LDIDGLCL) is the Nuclear export signal element.

The protein belongs to the bZIP family. YAP subfamily. Oxidative stress induces conformational changes through oxidation of cysteine residues, masking the nuclear export signal, thus abolishing nuclear export by CRM1/exportin 1.

Its subcellular location is the nucleus. It is found in the cytoplasm. Functionally, transcription activator involved in oxidative stress response and cadmium resistance. Regulates the transcription of genes encoding antioxidant enzymes and components of the cellular thiol-reducing pathways. Activity of the transcription factor is controlled through oxidation of specific cysteine residues resulting in the alteration of its subcellular location. Activation by alkyl hydroperoxides or cadmium induces nuclear accumulation and as a result YAP1 transcriptional activity. The sequence is that of AP-1-like transcription factor YAP1 (YAP1) from Kluyveromyces lactis (strain ATCC 8585 / CBS 2359 / DSM 70799 / NBRC 1267 / NRRL Y-1140 / WM37) (Yeast).